The sequence spans 248 residues: MEKKLISLFSGAGGMDIGFHAAGFSTAVAVEQDPSCCNTLRLNMPDTPVIEGDITSITTQVILEAAKVNPLEIDLVIGGPPCQSFSLAGKRMGMDDPRGMLVLEFLRVVREALPKCFVMENVKGMINWSKGKALEAIMTEASQPIKYAGKEYKYAVSYHVLNAADFGVPQFRERVFIVGNRLGKTFQFPEPTHGPSNQARQIDLFGKQLKPYKTVQDAISTLPPATPPSAMALRVSQTIKDRIKNHGY.

An SAM-dependent MTase C5-type domain is found at 3–248 (KKLISLFSGA…IKDRIKNHGY (246 aa)). Residue C82 is part of the active site.

Belongs to the class I-like SAM-binding methyltransferase superfamily. C5-methyltransferase family. As to quaternary structure, heterodimer of an alpha and a beta subunit.

It carries out the reaction a 2'-deoxycytidine in DNA + S-adenosyl-L-methionine = a 5-methyl-2'-deoxycytidine in DNA + S-adenosyl-L-homocysteine + H(+). In terms of biological role, a methylase, recognizes the double-stranded sequence 5'-CYCGRG-3', methylates C-1 on both strands, and protects the DNA from cleavage by the AquI endonuclease. The sequence is that of Type II methyltransferase M.AquIA (aquIMA) from Picosynechococcus sp. (strain ATCC 27264 / PCC 7002 / PR-6) (Agmenellum quadruplicatum).